Consider the following 323-residue polypeptide: NADH-ubiquinone oxidoreductase chain 1 (323 aa).

The next 9 membrane-spanning stretches (helical) occupy residues 10–30 (LLYIIIEGGLKSLIVIIGLLI), 52–72 (PNVVGFVGLLQPLADGLKLVL), 84–104 (IIYAIAPILTFTISIVLWSVI), 119–139 (VIFILAISSIGVYGIILAGWA), 157–177 (VSYEVALGLIILSIITYAGTV), 189–209 (VWFIVPLLPGFLLAFISALAE), 245–265 (YANIILMSVLLSVFFLGGIVS), 268–288 (ISGAMKGVGMLCSFIWVRATL), and 302–322 (KSLLPFALLIYIGVISMVLII).

Belongs to the complex I subunit 1 family.

The protein localises to the mitochondrion inner membrane. It carries out the reaction a ubiquinone + NADH + 5 H(+)(in) = a ubiquinol + NAD(+) + 4 H(+)(out). Core subunit of the mitochondrial membrane respiratory chain NADH dehydrogenase (Complex I) that is believed to belong to the minimal assembly required for catalysis. Complex I functions in the transfer of electrons from NADH to the respiratory chain. The immediate electron acceptor for the enzyme is believed to be ubiquinone. This chain is NADH-ubiquinone oxidoreductase chain 1 (nad1), found in Dictyostelium citrinum (Slime mold).